The sequence spans 386 residues: Copper-containing nitrite reductase (386 aa).

The N-terminal stretch at 1-18 (MKRQALAAIIASMFALAA) is a signal peptide. The N-palmitoyl cysteine moiety is linked to residue cysteine 19. A lipid anchor (S-diacylglycerol cysteine) is attached at cysteine 19. 2 Plastocyanin-like domains span residues 97–191 (WTFD…ILVE) and 241–342 (GHVG…LKVE). Cu cation contacts are provided by histidine 130, histidine 135, histidine 170, cysteine 171, histidine 179, and methionine 184. Histidine 135 contacts substrate. Histidine 276 contacts substrate. Histidine 325 provides a ligand contact to Cu cation. The tract at residues 363 to 386 (GAAPAASAPAASAPAASAPAKSDY) is disordered. Positions 364–386 (AAPAASAPAASAPAASAPAKSDY) are enriched in low complexity. Repeat copies occupy residues 367–371 (AASAP), 372–376 (AASAP), and 377–381 (AASAP). The segment at 367–381 (AASAPAASAPAASAP) is 3 X 5 AA tandem repeats of A-A-S-A-P.

This sequence belongs to the multicopper oxidase family. In terms of assembly, homotrimer. Cu(+) is required as a cofactor. Cu(2+) serves as cofactor.

Its subcellular location is the cell outer membrane. It catalyses the reaction nitric oxide + Fe(III)-[cytochrome c] + H2O = Fe(II)-[cytochrome c] + nitrite + 2 H(+). Functionally, catalyzes the reduction of nitrite to nitric oxide (NO). It could be essential for growth and survival in oxygen-depleted environments. This is Copper-containing nitrite reductase (aniA) from Neisseria meningitidis serogroup A / serotype 4A (strain DSM 15465 / Z2491).